The sequence spans 385 residues: tRNA-specific 2-thiouridylase MnmA (385 aa).

Residues 18–25 and L44 each bind ATP; that span reads AMSGGVDS. C112 (nucleophile) is an active-site residue. C112 and C209 form a disulfide bridge. Residue G136 coordinates ATP. The interval 159–161 is interaction with tRNA; sequence RDQ. The active-site Cysteine persulfide intermediate is the C209.

Belongs to the MnmA/TRMU family.

The protein localises to the cytoplasm. It catalyses the reaction S-sulfanyl-L-cysteinyl-[protein] + uridine(34) in tRNA + AH2 + ATP = 2-thiouridine(34) in tRNA + L-cysteinyl-[protein] + A + AMP + diphosphate + H(+). Functionally, catalyzes the 2-thiolation of uridine at the wobble position (U34) of tRNA, leading to the formation of s(2)U34. In Methylorubrum populi (strain ATCC BAA-705 / NCIMB 13946 / BJ001) (Methylobacterium populi), this protein is tRNA-specific 2-thiouridylase MnmA.